The chain runs to 174 residues: Crossover junction endodeoxyribonuclease RuvC (174 aa).

Residues Asp8, Glu69, and Asp141 contribute to the active site. Mg(2+) is bound by residues Asp8, Glu69, and Asp141.

The protein belongs to the RuvC family. Homodimer which binds Holliday junction (HJ) DNA. The HJ becomes 2-fold symmetrical on binding to RuvC with unstacked arms; it has a different conformation from HJ DNA in complex with RuvA. In the full resolvosome a probable DNA-RuvA(4)-RuvB(12)-RuvC(2) complex forms which resolves the HJ. Mg(2+) is required as a cofactor.

Its subcellular location is the cytoplasm. It catalyses the reaction Endonucleolytic cleavage at a junction such as a reciprocal single-stranded crossover between two homologous DNA duplexes (Holliday junction).. The RuvA-RuvB-RuvC complex processes Holliday junction (HJ) DNA during genetic recombination and DNA repair. Endonuclease that resolves HJ intermediates. Cleaves cruciform DNA by making single-stranded nicks across the HJ at symmetrical positions within the homologous arms, yielding a 5'-phosphate and a 3'-hydroxyl group; requires a central core of homology in the junction. The consensus cleavage sequence is 5'-(A/T)TT(C/G)-3'. Cleavage occurs on the 3'-side of the TT dinucleotide at the point of strand exchange. HJ branch migration catalyzed by RuvA-RuvB allows RuvC to scan DNA until it finds its consensus sequence, where it cleaves and resolves the cruciform DNA. The chain is Crossover junction endodeoxyribonuclease RuvC from Xanthomonas axonopodis pv. citri (strain 306).